Reading from the N-terminus, the 180-residue chain is Minor allergen Can f 2 (180 aa).

An N-terminal signal peptide occupies residues Met-1–Ala-18. A glycan (N-linked (GlcNAc...) asparagine) is linked at Asn-45. An intrachain disulfide couples Cys-82 to Cys-175.

The protein belongs to the calycin superfamily. Lipocalin family. As to expression, tongue epithelial tissue and parotid gland.

The protein localises to the secreted. This Canis lupus familiaris (Dog) protein is Minor allergen Can f 2.